Here is a 392-residue protein sequence, read N- to C-terminus: Ribosomal RNA large subunit methyltransferase G (392 aa).

Belongs to the methyltransferase superfamily. RlmG family.

Its subcellular location is the cytoplasm. It catalyses the reaction guanosine(1835) in 23S rRNA + S-adenosyl-L-methionine = N(2)-methylguanosine(1835) in 23S rRNA + S-adenosyl-L-homocysteine + H(+). In terms of biological role, specifically methylates the guanine in position 1835 (m2G1835) of 23S rRNA. The sequence is that of Ribosomal RNA large subunit methyltransferase G from Shewanella frigidimarina (strain NCIMB 400).